Reading from the N-terminus, the 266-residue chain is MPPRAKKSLGQNFLKDRNIAARIAAQLHIGPDDWVIEIGPGPGALTRHIHAAGPARLFLLEKDHHWAREHRLHPLAGTPEAQVVLTDALLFPWERLDAAHPWKVIGNLPYNVASPLMWDICSRAPGLLRASFMIQKEVGERIVAAPGSRQYGALSVWLQCFTKPEWCFVVPPHVFTPRPKVDSAVLAFTPRTDRPDAVQSKRLARVLRLCFQQRRKQLQGILRPHVGGDASALLAGLGIDPAARPETLSPERFIALGEAVAMSAIA.

Positions 12, 14, 39, 61, 87, and 107 each coordinate S-adenosyl-L-methionine.

This sequence belongs to the class I-like SAM-binding methyltransferase superfamily. rRNA adenine N(6)-methyltransferase family. RsmA subfamily.

It localises to the cytoplasm. It carries out the reaction adenosine(1518)/adenosine(1519) in 16S rRNA + 4 S-adenosyl-L-methionine = N(6)-dimethyladenosine(1518)/N(6)-dimethyladenosine(1519) in 16S rRNA + 4 S-adenosyl-L-homocysteine + 4 H(+). In terms of biological role, specifically dimethylates two adjacent adenosines (A1518 and A1519) in the loop of a conserved hairpin near the 3'-end of 16S rRNA in the 30S particle. May play a critical role in biogenesis of 30S subunits. The polypeptide is Ribosomal RNA small subunit methyltransferase A (Nitratidesulfovibrio vulgaris (strain ATCC 29579 / DSM 644 / CCUG 34227 / NCIMB 8303 / VKM B-1760 / Hildenborough) (Desulfovibrio vulgaris)).